The chain runs to 64 residues: Enteric beta-defensin (64 aa).

Residues 1–26 form the signal peptide; it reads MRLHHLLLTLLFLVLSAGSGFTQGIS. Cystine bridges form between Cys-31/Cys-60, Cys-38/Cys-53, and Cys-43/Cys-61.

The protein belongs to the beta-defensin family. LAP/TAP subfamily. Inducibly expressed in enteric epithelial cells.

It is found in the secreted. Has antibacterial activity. The chain is Enteric beta-defensin (EBD) from Bos taurus (Bovine).